Reading from the N-terminus, the 225-residue chain is Pyridoxine/pyridoxamine 5'-phosphate oxidase (225 aa).

Substrate is bound by residues 21-24 (RKSY) and K79. FMN is bound by residues 74–79 (RVVLIK), 89–90 (YT), R95, and K96. Y136, R140, and S144 together coordinate substrate. FMN is bound by residues 153–154 (QS) and W197. Residue 203–205 (RLH) participates in substrate binding. R207 contacts FMN.

The protein belongs to the pyridoxamine 5'-phosphate oxidase family. As to quaternary structure, homodimer. FMN serves as cofactor.

It carries out the reaction pyridoxamine 5'-phosphate + O2 + H2O = pyridoxal 5'-phosphate + H2O2 + NH4(+). The enzyme catalyses pyridoxine 5'-phosphate + O2 = pyridoxal 5'-phosphate + H2O2. It participates in cofactor metabolism; pyridoxal 5'-phosphate salvage; pyridoxal 5'-phosphate from pyridoxamine 5'-phosphate: step 1/1. Its pathway is cofactor metabolism; pyridoxal 5'-phosphate salvage; pyridoxal 5'-phosphate from pyridoxine 5'-phosphate: step 1/1. In terms of biological role, catalyzes the oxidation of either pyridoxine 5'-phosphate (PNP) or pyridoxamine 5'-phosphate (PMP) into pyridoxal 5'-phosphate (PLP). The chain is Pyridoxine/pyridoxamine 5'-phosphate oxidase from Paracidovorax citrulli (strain AAC00-1) (Acidovorax citrulli).